A 310-amino-acid polypeptide reads, in one-letter code: Probable manganese-dependent inorganic pyrophosphatase (310 aa).

Positions 9, 13, 15, 75, 97, and 149 each coordinate Mn(2+).

This sequence belongs to the PPase class C family. It depends on Mn(2+) as a cofactor.

The protein localises to the cytoplasm. The catalysed reaction is diphosphate + H2O = 2 phosphate + H(+). This is Probable manganese-dependent inorganic pyrophosphatase from Bacillus cytotoxicus (strain DSM 22905 / CIP 110041 / 391-98 / NVH 391-98).